Consider the following 259-residue polypeptide: Isoepoxydon dehydrogenase patN (259 aa).

2 residues coordinate NADP(+): Asn96 and Arg125. Residues Ser143 and Ser144 each act as proton donor in the active site. Tyr158, Lys162, and Ile191 together coordinate NADP(+). The active-site Proton acceptor is Tyr158. Lys162 functions as the Lowers pKa of active site Tyr in the catalytic mechanism.

The protein belongs to the short-chain dehydrogenases/reductases (SDR) family.

Its subcellular location is the cytoplasm. The protein resides in the cytosol. The catalysed reaction is isoepoxydon + NADP(+) = phyllostine + NADPH + H(+). It functions in the pathway mycotoxin biosynthesis; patulin biosynthesis. Isoepoxydon dehydrogenase; part of the gene cluster that mediates the biosynthesis of patulin, an acetate-derived tetraketide mycotoxin produced by several fungal species that shows antimicrobial properties against several bacteria. PatN catalyzes the conversion of isoepoxydon into phyllostine. The pathway begins with the synthesis of 6-methylsalicylic acid by the polyketide synthase (PKS) patK via condensation of acetate and malonate units. The 6-methylsalicylic acid decarboxylase patG then catalyzes the decarboxylation of 6-methylsalicylic acid to yield m-cresol (also known as 3-methylphenol). These first reactions occur in the cytosol. The intermediate m-cresol is then transported into the endoplasmic reticulum where the cytochrome P450 monooxygenase patH converts it to m-hydroxybenzyl alcohol, which is further converted to gentisyl alcohol by the cytochrome P450 monooxygenase patI. The oxidoreductases patJ and patO further convert gentisyl alcohol to isoepoxydon in the vacuole. PatN catalyzes then the transformation of isoepoxydon into phyllostine. The cluster protein patF is responsible for the conversion from phyllostine to neopatulin whereas the alcohol dehydrogenase patD converts neopatulin to E-ascladiol. The steps between isoepoxydon and E-ascladiol occur in the cytosol, and E-ascladiol is probably secreted to the extracellular space by one of the cluster-specific transporters patC or patM. Finally, the secreted patulin synthase patE catalyzes the conversion of E-ascladiol to patulin. The protein is Isoepoxydon dehydrogenase patN of Aspergillus clavatus (strain ATCC 1007 / CBS 513.65 / DSM 816 / NCTC 3887 / NRRL 1 / QM 1276 / 107).